A 97-amino-acid chain; its full sequence is RNA-binding protein Hfq (97 aa).

The 61-residue stretch at 10–70 (DPFLNALRKE…ISTIVPARSV (61 aa)) folds into the Sm domain. Positions 75-97 (ENRPQAAPASTLVQVETVQQPAE) are disordered. The segment covering 85–97 (TLVQVETVQQPAE) has biased composition (polar residues).

Belongs to the Hfq family. As to quaternary structure, homohexamer.

Functionally, RNA chaperone that binds small regulatory RNA (sRNAs) and mRNAs to facilitate mRNA translational regulation in response to envelope stress, environmental stress and changes in metabolite concentrations. Also binds with high specificity to tRNAs. In Neisseria meningitidis serogroup C / serotype 2a (strain ATCC 700532 / DSM 15464 / FAM18), this protein is RNA-binding protein Hfq.